The sequence spans 242 residues: Ubiquinone biosynthesis O-methyltransferase (242 aa).

Residues Arg36, Gly56, Asp77, and Met130 each coordinate S-adenosyl-L-methionine.

Belongs to the methyltransferase superfamily. UbiG/COQ3 family.

The enzyme catalyses a 3-demethylubiquinol + S-adenosyl-L-methionine = a ubiquinol + S-adenosyl-L-homocysteine + H(+). The catalysed reaction is a 3-(all-trans-polyprenyl)benzene-1,2-diol + S-adenosyl-L-methionine = a 2-methoxy-6-(all-trans-polyprenyl)phenol + S-adenosyl-L-homocysteine + H(+). The protein operates within cofactor biosynthesis; ubiquinone biosynthesis. Functionally, O-methyltransferase that catalyzes the 2 O-methylation steps in the ubiquinone biosynthetic pathway. The chain is Ubiquinone biosynthesis O-methyltransferase from Pasteurella multocida (strain Pm70).